Here is a 221-residue protein sequence, read N- to C-terminus: Fanconi anemia core complex-associated protein 24 (221 aa).

In terms of assembly, belongs to the multisubunit FA complex composed of FANCA, FANCB, FANCC, FANCE, FANCF, FANCG, FANCL/PHF9, FANCM and FAAP24. Interacts with FANCM.

Its subcellular location is the nucleus. Plays a role in DNA repair through recruitment of the FA core complex to damaged DNA. Regulates FANCD2 monoubiquitination upon DNA damage. Induces chromosomal instability as well as hypersensitivity to DNA cross-linking agents, when repressed. Targets FANCM/FAAP24 complex to the DNA, preferentially to single strand DNA. In Mus musculus (Mouse), this protein is Fanconi anemia core complex-associated protein 24.